The chain runs to 607 residues: DNA mismatch repair protein MutL (607 aa).

This sequence belongs to the DNA mismatch repair MutL/HexB family.

This protein is involved in the repair of mismatches in DNA. It is required for dam-dependent methyl-directed DNA mismatch repair. May act as a 'molecular matchmaker', a protein that promotes the formation of a stable complex between two or more DNA-binding proteins in an ATP-dependent manner without itself being part of a final effector complex. The chain is DNA mismatch repair protein MutL from Gemmatimonas aurantiaca (strain DSM 14586 / JCM 11422 / NBRC 100505 / T-27).